Reading from the N-terminus, the 150-residue chain is Large ribosomal subunit protein bL9 (150 aa).

It belongs to the bacterial ribosomal protein bL9 family.

Functionally, binds to the 23S rRNA. This is Large ribosomal subunit protein bL9 from Limosilactobacillus fermentum (strain NBRC 3956 / LMG 18251) (Lactobacillus fermentum).